Reading from the N-terminus, the 101-residue chain is Small ribosomal subunit protein uS10 (101 aa).

This sequence belongs to the universal ribosomal protein uS10 family. Part of the 30S ribosomal subunit.

Its function is as follows. Involved in the binding of tRNA to the ribosomes. The sequence is that of Small ribosomal subunit protein uS10 from Mycoplasmopsis synoviae (strain 53) (Mycoplasma synoviae).